The sequence spans 505 residues: Phosphoglycerate kinase A (505 aa).

Val-32, Asp-33, Phe-34, Asn-35, Arg-48, Ser-70, His-71, Gly-73, Arg-74, Arg-224, His-260, and Arg-261 together coordinate (2R)-3-phosphoglycerate. Positions 306 and 307 each coordinate ADP. Gly-306 provides a ligand contact to CDP. Ala-307 and Lys-308 together coordinate AMP. Ala-307 is a binding site for ATP. Ala-307 is a Mg(2+) binding site. Lys-308 serves as a coordination point for (2R)-3-phosphoglycerate. CDP is bound at residue Glu-311. Mg(2+) is bound at residue Glu-311. ADP is bound by residues Lys-312 and Gly-330. Position 312 (Lys-312) interacts with AMP. Residue Lys-312 coordinates ATP. Gly-330 provides a ligand contact to CDP. 2 residues coordinate AMP: Ala-331 and Ala-403. ATP-binding residues include Ala-331 and Ala-403. ADP contacts are provided by Ala-403 and Asn-427. Positions 428 and 433 each coordinate CDP. ADP contacts are provided by Phe-433, Glu-434, Glu-466, and Ser-467. Glu-434 contributes to the AMP binding site. Positions 434, 466, and 467 each coordinate ATP. Glu-466 provides a ligand contact to Mg(2+).

Belongs to the phosphoglycerate kinase family. As to quaternary structure, monomer. The cofactor is Mg(2+).

The catalysed reaction is (2R)-3-phosphoglycerate + ATP = (2R)-3-phospho-glyceroyl phosphate + ADP. Its pathway is carbohydrate degradation; glycolysis; pyruvate from D-glyceraldehyde 3-phosphate: step 2/5. The protein is Phosphoglycerate kinase A of Trypanosoma brucei brucei.